We begin with the raw amino-acid sequence, 478 residues long: UDP-N-acetylmuramate--L-alanine ligase (478 aa).

130-136 (GTHGKTT) is an ATP binding site.

This sequence belongs to the MurCDEF family.

The protein localises to the cytoplasm. The enzyme catalyses UDP-N-acetyl-alpha-D-muramate + L-alanine + ATP = UDP-N-acetyl-alpha-D-muramoyl-L-alanine + ADP + phosphate + H(+). It functions in the pathway cell wall biogenesis; peptidoglycan biosynthesis. Cell wall formation. This is UDP-N-acetylmuramate--L-alanine ligase from Microcystis aeruginosa (strain NIES-843 / IAM M-2473).